A 335-amino-acid polypeptide reads, in one-letter code: N-acetyl-gamma-glutamyl-phosphate reductase (335 aa).

Cys156 is an active-site residue.

The protein belongs to the NAGSA dehydrogenase family. Type 1 subfamily.

The protein localises to the cytoplasm. The enzyme catalyses N-acetyl-L-glutamate 5-semialdehyde + phosphate + NADP(+) = N-acetyl-L-glutamyl 5-phosphate + NADPH + H(+). The protein operates within amino-acid biosynthesis; L-arginine biosynthesis; N(2)-acetyl-L-ornithine from L-glutamate: step 3/4. Catalyzes the NADPH-dependent reduction of N-acetyl-5-glutamyl phosphate to yield N-acetyl-L-glutamate 5-semialdehyde. This is N-acetyl-gamma-glutamyl-phosphate reductase from Aeromonas salmonicida (strain A449).